Consider the following 230-residue polypeptide: Pyridoxal phosphate homeostasis protein (230 aa).

N6-(pyridoxal phosphate)lysine is present on Lys36.

It belongs to the pyridoxal phosphate-binding protein YggS/PROSC family.

Perhaps involved in proline biosynthesis. Its function is as follows. Pyridoxal 5'-phosphate (PLP)-binding protein, which is involved in PLP homeostasis. In Pseudomonas aeruginosa (strain ATCC 15692 / DSM 22644 / CIP 104116 / JCM 14847 / LMG 12228 / 1C / PRS 101 / PAO1), this protein is Pyridoxal phosphate homeostasis protein.